We begin with the raw amino-acid sequence, 199 residues long: Adenylyl-sulfate kinase (199 aa).

Position 35–42 (35–42) interacts with ATP; that stretch reads GLSGSGKS. Catalysis depends on Ser-109, which acts as the Phosphoserine intermediate.

It belongs to the APS kinase family.

The catalysed reaction is adenosine 5'-phosphosulfate + ATP = 3'-phosphoadenylyl sulfate + ADP + H(+). It participates in sulfur metabolism; hydrogen sulfide biosynthesis; sulfite from sulfate: step 2/3. Catalyzes the synthesis of activated sulfate. The protein is Adenylyl-sulfate kinase of Clostridium kluyveri (strain ATCC 8527 / DSM 555 / NBRC 12016 / NCIMB 10680 / K1).